Consider the following 124-residue polypeptide: Ragulator complex protein LAMTOR2 homolog (124 aa).

This sequence belongs to the GAMAD family. As to quaternary structure, part of the Ragulator complex.

Its function is as follows. Regulator of the TOR pathway, a signaling cascade that promotes cell growth in response to growth factors, energy levels, and amino acids. May activate the TOR signaling cascade in response to amino acids. The polypeptide is Ragulator complex protein LAMTOR2 homolog (Caenorhabditis elegans).